A 616-amino-acid chain; its full sequence is Dihydroxy-acid dehydratase (616 aa).

Position 81 (D81) interacts with Mg(2+). C122 serves as a coordination point for [2Fe-2S] cluster. Mg(2+) contacts are provided by D123 and K124. Position 124 is an N6-carboxylysine (K124). A [2Fe-2S] cluster-binding site is contributed by C195. Residue E491 coordinates Mg(2+). The active-site Proton acceptor is the S517.

The protein belongs to the IlvD/Edd family. As to quaternary structure, homodimer. [2Fe-2S] cluster serves as cofactor. It depends on Mg(2+) as a cofactor.

It catalyses the reaction (2R)-2,3-dihydroxy-3-methylbutanoate = 3-methyl-2-oxobutanoate + H2O. It carries out the reaction (2R,3R)-2,3-dihydroxy-3-methylpentanoate = (S)-3-methyl-2-oxopentanoate + H2O. It participates in amino-acid biosynthesis; L-isoleucine biosynthesis; L-isoleucine from 2-oxobutanoate: step 3/4. The protein operates within amino-acid biosynthesis; L-valine biosynthesis; L-valine from pyruvate: step 3/4. In terms of biological role, functions in the biosynthesis of branched-chain amino acids. Catalyzes the dehydration of (2R,3R)-2,3-dihydroxy-3-methylpentanoate (2,3-dihydroxy-3-methylvalerate) into 2-oxo-3-methylpentanoate (2-oxo-3-methylvalerate) and of (2R)-2,3-dihydroxy-3-methylbutanoate (2,3-dihydroxyisovalerate) into 2-oxo-3-methylbutanoate (2-oxoisovalerate), the penultimate precursor to L-isoleucine and L-valine, respectively. In Escherichia coli (strain K12 / MC4100 / BW2952), this protein is Dihydroxy-acid dehydratase.